Here is a 294-residue protein sequence, read N- to C-terminus: Acetylglutamate kinase (294 aa).

Substrate contacts are provided by residues 66–67, R88, and N193; that span reads GG.

It belongs to the acetylglutamate kinase family. ArgB subfamily.

The protein resides in the cytoplasm. It catalyses the reaction N-acetyl-L-glutamate + ATP = N-acetyl-L-glutamyl 5-phosphate + ADP. The protein operates within amino-acid biosynthesis; L-arginine biosynthesis; N(2)-acetyl-L-ornithine from L-glutamate: step 2/4. Its function is as follows. Catalyzes the ATP-dependent phosphorylation of N-acetyl-L-glutamate. The chain is Acetylglutamate kinase from Agrobacterium fabrum (strain C58 / ATCC 33970) (Agrobacterium tumefaciens (strain C58)).